Reading from the N-terminus, the 292-residue chain is 31 kDa ribonucleoprotein, chloroplastic (292 aa).

Positions 88 to 166 constitute an RRM 1 domain; it reads LKLFVGNLPF…RAIRVNAGPA (79 aa). Positions 165–203 are disordered; it reads PAPAKRENSSFGGGRGGNSSYGGGRDGNSSFGGARGGRS. A linker (Gly-rich) region spans residues 167–207; sequence PAKRENSSFGGGRGGNSSYGGGRDGNSSFGGARGGRSVDSS. Residues 175 to 190 are compositionally biased toward gly residues; the sequence is FGGGRGGNSSYGGGRD. An RRM 2 domain is found at 208–286; sequence NRVYVGNLSW…RSIRVSAAEE (79 aa).

As to expression, expressed at high levels in the leaves and seedlings, and lower levels are seen in the stems and roots.

The protein resides in the plastid. It is found in the chloroplast. The chain is 31 kDa ribonucleoprotein, chloroplastic from Nicotiana plumbaginifolia (Leadwort-leaved tobacco).